We begin with the raw amino-acid sequence, 21 residues long: Fibrinogen beta chain (21 aa).

Glutamine 1 is subject to Pyrrolidone carboxylic acid. The segment covering 1–11 has biased composition (acidic residues); that stretch reads QPSYDYDEEED. Residues 1 to 21 are disordered; it reads QPSYDYDEEEDDRAKLRLDAR. At tyrosine 6 the chain carries Sulfotyrosine. A compositionally biased stretch (basic and acidic residues) spans 12–21; it reads DRAKLRLDAR.

As to quaternary structure, heterohexamer; disulfide linked. Contains 2 sets of 3 non-identical chains (alpha, beta and gamma). The 2 heterotrimers are in head to head conformation with the N-termini in a small central domain. Post-translationally, conversion of fibrinogen to fibrin is triggered by thrombin, which cleaves fibrinopeptides A and B from alpha and beta chains, and thus exposes the N-terminal polymerization sites responsible for the formation of the soft clot.

The protein localises to the secreted. Its function is as follows. Cleaved by the protease thrombin to yield monomers which, together with fibrinogen alpha (FGA) and fibrinogen gamma (FGG), polymerize to form an insoluble fibrin matrix. Fibrin has a major function in hemostasis as one of the primary components of blood clots. In addition, functions during the early stages of wound repair to stabilize the lesion and guide cell migration during re-epithelialization. Was originally thought to be essential for platelet aggregation, based on in vitro studies using anticoagulated blood. However subsequent studies have shown that it is not absolutely required for thrombus formation in vivo. Enhances expression of SELP in activated platelets. Maternal fibrinogen is essential for successful pregnancy. Fibrin deposition is also associated with infection, where it protects against IFNG-mediated hemorrhage. May also facilitate the antibacterial immune response via both innate and T-cell mediated pathways. This Antilocapra americana (Pronghorn) protein is Fibrinogen beta chain (FGB).